Consider the following 436-residue polypeptide: uncharacterized protein (436 aa).

The N-terminal stretch at 1 to 18 (MMKRFVALSMAIFSLSFA) is a signal peptide.

This is an uncharacterized protein from Aquifex aeolicus (strain VF5).